The primary structure comprises 216 residues: Ras-related protein RABA1b (216 aa).

Position 20-27 (20-27) interacts with GTP; it reads GDSGVGKS. The Effector region signature appears at 42–50; that stretch reads SKSTIGVEF. Residues 68–72, 126–129, and 156–157 each bind GTP; these read DTAGQ, NKSD, and SA. Residues cysteine 213 and cysteine 214 are each lipidated (S-geranylgeranyl cysteine).

It belongs to the small GTPase superfamily. Rab family.

The protein resides in the cell membrane. Its function is as follows. Intracellular vesicle trafficking and protein transport. This Arabidopsis thaliana (Mouse-ear cress) protein is Ras-related protein RABA1b (RABA1B).